The primary structure comprises 116 residues: Large ribosomal subunit protein bL19 (116 aa).

Belongs to the bacterial ribosomal protein bL19 family.

Its function is as follows. This protein is located at the 30S-50S ribosomal subunit interface and may play a role in the structure and function of the aminoacyl-tRNA binding site. The protein is Large ribosomal subunit protein bL19 of Nocardioides sp. (strain ATCC BAA-499 / JS614).